The following is an 892-amino-acid chain: Alanine--tRNA ligase (892 aa).

Zn(2+) contacts are provided by His594, His598, Cys702, and His706.

It belongs to the class-II aminoacyl-tRNA synthetase family. Zn(2+) is required as a cofactor.

The protein localises to the cytoplasm. The enzyme catalyses tRNA(Ala) + L-alanine + ATP = L-alanyl-tRNA(Ala) + AMP + diphosphate. In terms of biological role, catalyzes the attachment of alanine to tRNA(Ala) in a two-step reaction: alanine is first activated by ATP to form Ala-AMP and then transferred to the acceptor end of tRNA(Ala). Also edits incorrectly charged Ser-tRNA(Ala) and Gly-tRNA(Ala) via its editing domain. This is Alanine--tRNA ligase from Pyrobaculum arsenaticum (strain DSM 13514 / JCM 11321 / PZ6).